Reading from the N-terminus, the 324-residue chain is Anthranilate phosphoribosyltransferase (324 aa).

Residues Gly72, Gly75–Asp76, Thr80, Asn82–Thr85, Lys99–Ser107, and Ser111 each bind 5-phospho-alpha-D-ribose 1-diphosphate. Residue Gly72 coordinates anthranilate. Ser84 lines the Mg(2+) pocket. Asn102 is an anthranilate binding site. Arg157 is an anthranilate binding site. Residues Asp215 and Glu216 each contribute to the Mg(2+) site.

Belongs to the anthranilate phosphoribosyltransferase family. In terms of assembly, homodimer. Mg(2+) is required as a cofactor.

The enzyme catalyses N-(5-phospho-beta-D-ribosyl)anthranilate + diphosphate = 5-phospho-alpha-D-ribose 1-diphosphate + anthranilate. It participates in amino-acid biosynthesis; L-tryptophan biosynthesis; L-tryptophan from chorismate: step 2/5. Functionally, catalyzes the transfer of the phosphoribosyl group of 5-phosphorylribose-1-pyrophosphate (PRPP) to anthranilate to yield N-(5'-phosphoribosyl)-anthranilate (PRA). In Pyrococcus furiosus (strain ATCC 43587 / DSM 3638 / JCM 8422 / Vc1), this protein is Anthranilate phosphoribosyltransferase.